Consider the following 657-residue polypeptide: Pyoverdine export ATP-binding/permease protein PvdT (657 aa).

An ABC transporter domain is found at 6–245 (IDLRGIRKSY…RSVNPAALQA (240 aa)). Position 43 to 50 (43 to 50 (GASGSGKS)) interacts with ATP. A run of 4 helical transmembrane segments spans residues 285–305 (ALTL…LAVG), 539–559 (IAAI…LMTV), 590–610 (LSVV…AALL), and 620–640 (LPAV…FGFM).

It belongs to the ABC transporter superfamily. Macrolide exporter (TC 3.A.1.122) family. In terms of assembly, part of the tripartite efflux system PvdRT-OpmQ, which is composed of an inner membrane component with both ATPase and permease domains, PvdT, a periplasmic membrane fusion protein, PvdR, and an outer membrane component, OpmQ.

It localises to the cell inner membrane. Part of the tripartite efflux system PvdRT-OpmQ required for the secretion into the extracellular milieu of the siderophore pyoverdine (PVD), which is involved in iron acquisition. This subunit binds PVD and drives its secretion by hydrolyzing ATP. The system is responsible for export of newly synthesized PVD after the final steps of biosynthesis have taken place in the periplasm. It is also responsible for recycling of PVD after internalization of ferri-PVD into the periplasm by the outer-membrane receptor FpvA and release of iron from PVD, thus making PVD available for new cycles of iron uptake. The protein is Pyoverdine export ATP-binding/permease protein PvdT of Pseudomonas syringae pv. syringae (strain B728a).